A 118-amino-acid chain; its full sequence is Thioredoxin-like protein CXXS1 (118 aa).

Residues 2–110 enclose the Thioredoxin domain; it reads ARVVKIDSAE…IKKRVDGFVQ (109 aa).

The protein belongs to the thioredoxin family. In terms of tissue distribution, ubiquitous.

It is found in the cytoplasm. Functionally, possesses low disulfide reductase activity, but efficient protein disulfide isomerase activity. Does not possess deglutathionylation activity. The polypeptide is Thioredoxin-like protein CXXS1 (CXXS1) (Arabidopsis thaliana (Mouse-ear cress)).